Consider the following 179-residue polypeptide: uncharacterized protein (179 aa).

Residues 1–32 are disordered; sequence MELQGAQEDLGISLSSPRRNHETRPGSKAKGR.

This is an uncharacterized protein from Homo sapiens (Human).